We begin with the raw amino-acid sequence, 316 residues long: 4-hydroxy-3-methylbut-2-enyl diphosphate reductase (316 aa).

Residue cysteine 12 coordinates [4Fe-4S] cluster. (2E)-4-hydroxy-3-methylbut-2-enyl diphosphate is bound by residues histidine 41 and histidine 74. Residues histidine 41 and histidine 74 each contribute to the dimethylallyl diphosphate site. The isopentenyl diphosphate site is built by histidine 41 and histidine 74. Cysteine 96 is a binding site for [4Fe-4S] cluster. (2E)-4-hydroxy-3-methylbut-2-enyl diphosphate is bound at residue histidine 124. A dimethylallyl diphosphate-binding site is contributed by histidine 124. Residue histidine 124 coordinates isopentenyl diphosphate. Catalysis depends on glutamate 126, which acts as the Proton donor. Threonine 167 lines the (2E)-4-hydroxy-3-methylbut-2-enyl diphosphate pocket. Cysteine 197 serves as a coordination point for [4Fe-4S] cluster. (2E)-4-hydroxy-3-methylbut-2-enyl diphosphate is bound by residues serine 225, serine 226, asparagine 227, and serine 269. Dimethylallyl diphosphate contacts are provided by serine 225, serine 226, asparagine 227, and serine 269. Isopentenyl diphosphate contacts are provided by serine 225, serine 226, asparagine 227, and serine 269.

It belongs to the IspH family. Homodimer. [4Fe-4S] cluster serves as cofactor.

The catalysed reaction is isopentenyl diphosphate + 2 oxidized [2Fe-2S]-[ferredoxin] + H2O = (2E)-4-hydroxy-3-methylbut-2-enyl diphosphate + 2 reduced [2Fe-2S]-[ferredoxin] + 2 H(+). The enzyme catalyses dimethylallyl diphosphate + 2 oxidized [2Fe-2S]-[ferredoxin] + H2O = (2E)-4-hydroxy-3-methylbut-2-enyl diphosphate + 2 reduced [2Fe-2S]-[ferredoxin] + 2 H(+). It participates in isoprenoid biosynthesis; dimethylallyl diphosphate biosynthesis; dimethylallyl diphosphate from (2E)-4-hydroxy-3-methylbutenyl diphosphate: step 1/1. The protein operates within isoprenoid biosynthesis; isopentenyl diphosphate biosynthesis via DXP pathway; isopentenyl diphosphate from 1-deoxy-D-xylulose 5-phosphate: step 6/6. Its function is as follows. Catalyzes the conversion of 1-hydroxy-2-methyl-2-(E)-butenyl 4-diphosphate (HMBPP) into a mixture of isopentenyl diphosphate (IPP) and dimethylallyl diphosphate (DMAPP). Acts in the terminal step of the DOXP/MEP pathway for isoprenoid precursor biosynthesis. This Escherichia coli (strain ATCC 8739 / DSM 1576 / NBRC 3972 / NCIMB 8545 / WDCM 00012 / Crooks) protein is 4-hydroxy-3-methylbut-2-enyl diphosphate reductase.